A 574-amino-acid chain; its full sequence is 2-succinyl-5-enolpyruvyl-6-hydroxy-3-cyclohexene-1-carboxylate synthase (574 aa).

The protein belongs to the TPP enzyme family. MenD subfamily. In terms of assembly, homodimer. It depends on Mg(2+) as a cofactor. Mn(2+) serves as cofactor. The cofactor is thiamine diphosphate.

The catalysed reaction is isochorismate + 2-oxoglutarate + H(+) = 5-enolpyruvoyl-6-hydroxy-2-succinyl-cyclohex-3-ene-1-carboxylate + CO2. It participates in quinol/quinone metabolism; 1,4-dihydroxy-2-naphthoate biosynthesis; 1,4-dihydroxy-2-naphthoate from chorismate: step 2/7. Its pathway is cofactor biosynthesis; phylloquinone biosynthesis. In terms of biological role, catalyzes the thiamine diphosphate-dependent decarboxylation of 2-oxoglutarate and the subsequent addition of the resulting succinic semialdehyde-thiamine pyrophosphate anion to isochorismate to yield 2-succinyl-5-enolpyruvyl-6-hydroxy-3-cyclohexene-1-carboxylate (SEPHCHC). This is 2-succinyl-5-enolpyruvyl-6-hydroxy-3-cyclohexene-1-carboxylate synthase from Synechococcus sp. (strain RCC307).